The following is a 167-amino-acid chain: N-alpha-acetyltransferase (167 aa).

The 156-residue stretch at 12 to 167 (YRIRNARLTD…EDAYLMAAPL (156 aa)) folds into the N-acetyltransferase domain. Tyrosine 37 is a binding site for substrate. A Zn(2+)-binding site is contributed by histidine 88. Acetyl-CoA is bound by residues 92-94 (IAV) and 100-105 (RLGIGT). Glutamate 127 is a binding site for Zn(2+). Residues asparagine 132 and 139–141 (YKK) contribute to the acetyl-CoA site. Tyrosine 154 provides a ligand contact to substrate.

The protein belongs to the acetyltransferase family. ARD1 subfamily. As to quaternary structure, homodimer.

It is found in the cytoplasm. It catalyses the reaction N-terminal L-alanyl-[protein] + acetyl-CoA = N-terminal N(alpha)-acetyl-L-alanyl-[protein] + CoA + H(+). It carries out the reaction N-terminal L-seryl-[protein] + acetyl-CoA = N-terminal N(alpha)-acetyl-L-seryl-[protein] + CoA + H(+). The enzyme catalyses N-terminal L-methionyl-L-leucyl-[protein] + acetyl-CoA = N-terminal N(alpha)-acetyl-L-methionyl-L-leucyl-[protein] + CoA + H(+). The catalysed reaction is N-terminal L-methionyl-L-glutamyl-[protein] + acetyl-CoA = N-terminal N(alpha)-acetyl-L-methionyl-L-glutamyl-[protein] + CoA + H(+). Displays alpha (N-terminal) acetyltransferase activity. Catalyzes the covalent attachment of an acetyl moiety from acetyl-CoA to the free alpha-amino group at the N-terminus of a protein. This chain is N-alpha-acetyltransferase, found in Sulfurisphaera tokodaii (strain DSM 16993 / JCM 10545 / NBRC 100140 / 7) (Sulfolobus tokodaii).